A 373-amino-acid chain; its full sequence is XK-related protein 9 (373 aa).

A run of 8 helical transmembrane segments spans residues 8 to 28 (FMMS…DIVL), 38 to 58 (YVLG…VHCF), 166 to 186 (MVIM…QIAL), 206 to 226 (LFYK…LLFV), 230 to 250 (VALL…FINH), 256 to 276 (SVSM…FTFF), 295 to 315 (VLGT…IFNS), and 318 to 338 (FIPI…FLGV).

This sequence belongs to the XK family. Undergoes proteolytic processing by caspase-3 (CASP3), caspase-6 (CASP6) and caspase-7 (CASP7) to generate the XK-related protein 9, processed form, leading to its activation. As to expression, highly expressed in the small intestines; weakly expressed in the pancreas, liver, stomach, and large intestines.

It is found in the cell membrane. It catalyses the reaction a 1,2-diacyl-sn-glycero-3-phospho-L-serine(in) = a 1,2-diacyl-sn-glycero-3-phospho-L-serine(out). With respect to regulation, activated upon caspase cleavage to generate the XK-related protein 9, processed form. Does not act prior the onset of apoptosis. Functionally, phospholipid scramblase that promotes phosphatidylserine exposure on apoptotic cell surface. Phosphatidylserine is a specific marker only present at the surface of apoptotic cells and acts as a specific signal for engulfment. In Mus musculus (Mouse), this protein is XK-related protein 9.